The chain runs to 130 residues: Gonadotropin subunit beta-1 (130 aa).

The N-terminal stretch at 1-18 is a signal peptide; that stretch reads MRMRFVVMVILLPALMMS. Intrachain disulfides connect Cys-26-Cys-74, Cys-40-Cys-89, Cys-51-Cys-105, Cys-55-Cys-107, and Cys-110-Cys-117. Asn-30 carries an N-linked (GlcNAc...) asparagine glycan.

The protein belongs to the glycoprotein hormones subunit beta family. As to quaternary structure, heterodimer of an alpha and a beta chain.

It is found in the secreted. In terms of biological role, involved in gametogenesis and steroidogenesis. The polypeptide is Gonadotropin subunit beta-1 (cgba) (Carassius auratus (Goldfish)).